A 550-amino-acid polypeptide reads, in one-letter code: Thermosome subunit (550 aa).

Residues 529-550 form a disordered region; the sequence is KEKEGEKGGGGSEDFSSSSDLD. Residues 541-550 are compositionally biased toward low complexity; sequence EDFSSSSDLD.

This sequence belongs to the TCP-1 chaperonin family. Forms an oligomeric complex of eight-membered rings.

Its function is as follows. Molecular chaperone; binds unfolded polypeptides in vitro, and has a weak ATPase activity. The protein is Thermosome subunit (ths) of Pyrococcus abyssi (strain GE5 / Orsay).